We begin with the raw amino-acid sequence, 177 residues long: uncharacterized protein (177 aa).

It to B.subtilis YutG.

This is an uncharacterized protein from Bacillus subtilis (strain 168).